A 296-amino-acid polypeptide reads, in one-letter code: Glycine--tRNA ligase alpha subunit (296 aa).

Belongs to the class-II aminoacyl-tRNA synthetase family. Tetramer of two alpha and two beta subunits.

It localises to the cytoplasm. It catalyses the reaction tRNA(Gly) + glycine + ATP = glycyl-tRNA(Gly) + AMP + diphosphate. This Desulfitobacterium hafniense (strain DSM 10664 / DCB-2) protein is Glycine--tRNA ligase alpha subunit.